The chain runs to 82 residues: MVMIRLARMGARKQPYYRIVVIEKRSARNGRSLEVVGTYNPRTNPASVELKRDRIDYWTGKGAQMSDRVAKLVQQNPAPAAA.

The protein belongs to the bacterial ribosomal protein bS16 family.

The sequence is that of Small ribosomal subunit protein bS16 from Acidobacterium capsulatum (strain ATCC 51196 / DSM 11244 / BCRC 80197 / JCM 7670 / NBRC 15755 / NCIMB 13165 / 161).